Here is a 211-residue protein sequence, read N- to C-terminus: Thiamine-phosphate synthase (211 aa).

Residues 37–41 (QLRIK) and Asn-69 each bind 4-amino-2-methyl-5-(diphosphooxymethyl)pyrimidine. Residues Asp-70 and Asp-89 each coordinate Mg(2+). 4-amino-2-methyl-5-(diphosphooxymethyl)pyrimidine is bound at residue Ser-108. 134-136 (TQT) serves as a coordination point for 2-[(2R,5Z)-2-carboxy-4-methylthiazol-5(2H)-ylidene]ethyl phosphate. Lys-137 contributes to the 4-amino-2-methyl-5-(diphosphooxymethyl)pyrimidine binding site. 2-[(2R,5Z)-2-carboxy-4-methylthiazol-5(2H)-ylidene]ethyl phosphate contacts are provided by residues Gly-166 and 186 to 187 (VS).

This sequence belongs to the thiamine-phosphate synthase family. It depends on Mg(2+) as a cofactor.

It carries out the reaction 2-[(2R,5Z)-2-carboxy-4-methylthiazol-5(2H)-ylidene]ethyl phosphate + 4-amino-2-methyl-5-(diphosphooxymethyl)pyrimidine + 2 H(+) = thiamine phosphate + CO2 + diphosphate. It catalyses the reaction 2-(2-carboxy-4-methylthiazol-5-yl)ethyl phosphate + 4-amino-2-methyl-5-(diphosphooxymethyl)pyrimidine + 2 H(+) = thiamine phosphate + CO2 + diphosphate. The enzyme catalyses 4-methyl-5-(2-phosphooxyethyl)-thiazole + 4-amino-2-methyl-5-(diphosphooxymethyl)pyrimidine + H(+) = thiamine phosphate + diphosphate. Its pathway is cofactor biosynthesis; thiamine diphosphate biosynthesis; thiamine phosphate from 4-amino-2-methyl-5-diphosphomethylpyrimidine and 4-methyl-5-(2-phosphoethyl)-thiazole: step 1/1. Its function is as follows. Condenses 4-methyl-5-(beta-hydroxyethyl)thiazole monophosphate (THZ-P) and 2-methyl-4-amino-5-hydroxymethyl pyrimidine pyrophosphate (HMP-PP) to form thiamine monophosphate (TMP). The chain is Thiamine-phosphate synthase from Shigella sonnei (strain Ss046).